The chain runs to 322 residues: Transmembrane and ubiquitin-like domain-containing protein 2 (322 aa).

The chain crosses the membrane as a helical span at residues 38–58; sequence VVAGVVVLILALVLAWLSTYV. Residues 88 to 168 are disordered; sequence VAGQGTPEPT…VRSEDSTCLP (81 aa). The segment covering 115 to 130 has biased composition (gly residues); sequence EGGGDPTGEPGAGGGV. One can recognise a Ubiquitin-like domain in the interval 174 to 247; that stretch reads ISVRLKFFND…IHCHRSPPGS (74 aa). The next 2 membrane-spanning stretches (helical) occupy residues 267–287 and 296–316; these read LGVS…GVVW and FFTA…SFLV.

Its subcellular location is the membrane. The chain is Transmembrane and ubiquitin-like domain-containing protein 2 (TMUB2) from Bos taurus (Bovine).